Here is a 353-residue protein sequence, read N- to C-terminus: UPF0283 membrane protein YcjF (353 aa).

Helical transmembrane passes span Met70–Thr90, Val100–Val120, and Glu213–Trp233.

Belongs to the UPF0283 family.

The protein resides in the cell inner membrane. The protein is UPF0283 membrane protein YcjF of Escherichia coli O127:H6 (strain E2348/69 / EPEC).